Here is a 114-residue protein sequence, read N- to C-terminus: Histone H3-7 (114 aa).

Residues 1–17 (NTGGKAPRKHIAHKQAK) are compositionally biased toward basic residues. Residues 1–32 (NTGGKAPRKHIAHKQAKKSSAAAATGGVKKPH) are disordered. Over residues 18–28 (KSSAAAATGGV) the composition is skewed to low complexity.

The protein belongs to the histone H3 family. In terms of assembly, the nucleosome is a histone octamer containing two molecules each of H2A, H2B, H3 and H4 assembled in one H3-H4 heterotetramer and two H2A-H2B heterodimers. The octamer wraps approximately 147 bp of DNA.

Its subcellular location is the nucleus. It is found in the chromosome. Functionally, core component of nucleosome. Nucleosomes wrap and compact DNA into chromatin, limiting DNA accessibility to the cellular machineries which require DNA as a template. Histones thereby play a central role in transcription regulation, DNA repair, DNA replication and chromosomal stability. DNA accessibility is regulated via a complex set of post-translational modifications of histones, also called histone code, and nucleosome remodeling. The protein is Histone H3-7 (H3-7) of Stylonychia lemnae (Ciliate).